The chain runs to 183 residues: Potassium-transporting ATPase KdpC subunit (183 aa).

A helical membrane pass occupies residues 10 to 30; the sequence is LTVFTLILFAVIYPLAIYGIA.

This sequence belongs to the KdpC family. The system is composed of three essential subunits: KdpA, KdpB and KdpC.

It is found in the cell inner membrane. Functionally, part of the high-affinity ATP-driven potassium transport (or Kdp) system, which catalyzes the hydrolysis of ATP coupled with the electrogenic transport of potassium into the cytoplasm. This subunit acts as a catalytic chaperone that increases the ATP-binding affinity of the ATP-hydrolyzing subunit KdpB by the formation of a transient KdpB/KdpC/ATP ternary complex. This is Potassium-transporting ATPase KdpC subunit from Flavobacterium johnsoniae (strain ATCC 17061 / DSM 2064 / JCM 8514 / BCRC 14874 / CCUG 350202 / NBRC 14942 / NCIMB 11054 / UW101) (Cytophaga johnsonae).